We begin with the raw amino-acid sequence, 318 residues long: 2-keto-3-deoxygluconate permease (318 aa).

Helical transmembrane passes span 10–30 (IPGGLMLVPLFLGALCNTFTP), 42–62 (GLITGTIPILAVWFFCMGASI), 76–96 (VLVVTKIATAWVVALIAGTFL), 105–125 (MLAGISVLALVAAMDMTNGGL), 139–159 (AGAFVLMSLESGPLMTMVILG), 163–183 (IATFEPQLFVGAVLPFLIGFA), 199–219 (VQTLIPFFAFALGNTINLSVI), 224–244 (FAGIFLGLLVIVVTGIPLILA), 263–283 (AGAAVATPLLIANMAPEFAPV), and 289–309 (ALVATSVIVTSVLVPIITALW).

It belongs to the KdgT transporter family.

The protein localises to the cell inner membrane. It carries out the reaction 2-dehydro-3-deoxy-D-gluconate(in) + H(+)(in) = 2-dehydro-3-deoxy-D-gluconate(out) + H(+)(out). In terms of biological role, catalyzes the proton-dependent uptake of 2-keto-3-deoxygluconate (KDG) into the cell. The protein is 2-keto-3-deoxygluconate permease of Pectobacterium carotovorum subsp. carotovorum (Erwinia carotovora subsp. carotovora).